The following is a 780-amino-acid chain: Potassium/sodium hyperpolarization-activated cyclic nucleotide-gated channel 3 (780 aa).

The disordered stretch occupies residues 1–47; sequence MEEEARPAVGDGEAATPARETPPAAPAQARAASGGVPESAPEPKRRQ. Residues 1 to 96 are Cytoplasmic-facing; it reads MEEEARPAVG…PYSDFRFYWD (96 aa). Residues 13–32 are compositionally biased toward low complexity; that stretch reads EAATPARETPPAAPAQARAA. The interval 45 to 90 is involved in subunit assembly; that stretch reads RRQLGTLLQPTVNKFSLRVFGSHKAVEIEQERVKSAGAWIIHPYSD. Residues 97–117 form a helical membrane-spanning segment; it reads LIMLLLMVGNLIVLPVGITFF. The Extracellular segment spans residues 118–123; that stretch reads KEENSP. Residues 124-144 traverse the membrane as a helical segment; that stretch reads PWIVFNVLSDTFFLLDLVLNF. At 145–170 the chain is on the cytoplasmic side; it reads RTGIVVEEGAEILLAPRAIRTRYLRT. Residues 171–191 traverse the membrane as a helical segment; that stretch reads WFLVDLISSIPVDYIFLVVEL. Over 192-200 the chain is Extracellular; it reads EPRLDAEVY. A helical; Voltage-sensor transmembrane segment spans residues 201–221; sequence KTARALRIVRFTKILSLLRLL. The Cytoplasmic segment spans residues 222-252; that stretch reads RLSRLIRYMHQWEEIFHMTYDLASAVVRIFN. The helical transmembrane segment at 253–273 threads the bilayer; that stretch reads LIGMMLLLCHWDGCLQFLVPM. At 274–296 the chain is on the extracellular side; sequence LQDFPSDCWVSMNRMVNHSWGRQ. Residue Asn-290 is glycosylated (N-linked (GlcNAc...) asparagine). The segment at residues 297 to 318 is an intramembrane region (pore-forming); that stretch reads YSHALFKAMSHMLCIGYGQQAP. At 319-328 the chain is on the extracellular side; the sequence is VGMPDVWLTM. The chain crosses the membrane as a helical span at residues 329 to 349; it reads LSMIVGATCYAMFIGHATALI. Topologically, residues 350–780 are cytoplasmic; the sequence is QSLDSSRRQY…PRGPQISANM (431 aa). The tract at residues 353 to 780 is interaction with KCTD3; the sequence is DSSRRQYQEK…PRGPQISANM (428 aa). 3',5'-cyclic AMP contacts are provided by Gly-491, Glu-492, Cys-494, Arg-501, Thr-502, Arg-542, and Arg-545. The tract at residues 549-569 is disordered; sequence KNSILQRKRSEPSPGSSSGGV. A Phosphoserine modification is found at Ser-634. A compositionally biased stretch (polar residues) spans 687-698; that stretch reads ASLSRTGRSQVS. The interval 687–780 is disordered; that stretch reads ASLSRTGRSQ…PRGPQISANM (94 aa).

The protein belongs to the potassium channel HCN family. As to quaternary structure, homotetramer. The potassium channel is composed of a homo- or heterotetrameric complex of pore-forming subunits. Interacts with HCN1. Interacts with KCTD3; this interaction increases cell surface expression and current density of this channel. Interacts with PEX5L.

It is found in the cell membrane. It carries out the reaction K(+)(in) = K(+)(out). It catalyses the reaction Na(+)(in) = Na(+)(out). Inhibited by Cs(1+) and ivabradine. Unlike HCN2 and HCN4, HCN3 is insensitive to cyclic nucleotides, such as cAMP or cGMP. This lack of sensitivity of HCN3, despite harboring a functional cyclic nucleotide-binding domain (CNBD), may be explained by its shorter C-terminal sequence, which may alter the normal autoinhibition of the channel. Phosphatidylinositol-4,5-bisphosphate (PIP(2)) shifts HCN3 activation to more depolarized potentials and accelerated activation kinetics. Functionally, hyperpolarization-activated ion channel that are permeable to sodium and potassium ions, with an about 3:1 preference for potassium ions. Contributes to the native pacemaker currents in heart (If) and in neurons (Ih). In particular, plays a pivotal role in maintaining excitability and promoting rhythmic burst firing within hypothalamic nuclei. Exerts a significant influence on the configuration of the cardiac action potential waveform. Does not appear to play a prominent role in the processing of acute, neuropathic, or inflammatory pain. The sequence is that of Potassium/sodium hyperpolarization-activated cyclic nucleotide-gated channel 3 (Hcn3) from Rattus norvegicus (Rat).